The primary structure comprises 472 residues: MTMIRTRFAPSPTGYLHIGGARTALYSWLHTRRHGGRFVLRIEDTDRERSTPEAVNAILEGMAWLGLDYDEGPFYQTERYDRYRQHLQTLLDAGQAYYCYCTKDRLERLRTEQQARKEKPRYDGRCRDLDGPPSEEVADEPVIRFRTPLEGHVVVEDAIRGKVQFLNSELDDLVIARGDGSPTYNFTVVVDDLEMGVTDVIRGDDHLNNTPRQIHLYQALGFEPPRFAHVPMILGEDGKRLSKRHGSVSVLQYRDEGYLPEALLNYLVRLGWSHGDQEVFGVDELIQLFDINEVNHSASTFNPSKLQWLNQQHIMRAEPNHIARHLGPFLAERGVDPAEGPALEAVVRTQQERAKTLVEMADNSLFFYRRPEAYEEKAARKNFKEGTAEILEHCQHCFSGLPSWDAESIHGVVTEAAEAFDVKMGKVAQPLRVAVSGSAVSPPIDATLELLGREETVARVGQAAEWVRQNVG.

The short motif at 10 to 20 (PSPTGYLHIGG) is the 'HIGH' region element. Cys99, Cys101, Cys126, and Asp128 together coordinate Zn(2+). Residues 112–130 (EQQARKEKPRYDGRCRDLD) are compositionally biased toward basic and acidic residues. Positions 112–137 (EQQARKEKPRYDGRCRDLDGPPSEEV) are disordered. The short motif at 240–244 (RLSKR) is the 'KMSKS' region element. Residue Lys243 coordinates ATP.

Belongs to the class-I aminoacyl-tRNA synthetase family. Glutamate--tRNA ligase type 1 subfamily. In terms of assembly, monomer. Zn(2+) serves as cofactor.

The protein resides in the cytoplasm. The enzyme catalyses tRNA(Glu) + L-glutamate + ATP = L-glutamyl-tRNA(Glu) + AMP + diphosphate. In terms of biological role, catalyzes the attachment of glutamate to tRNA(Glu) in a two-step reaction: glutamate is first activated by ATP to form Glu-AMP and then transferred to the acceptor end of tRNA(Glu). The chain is Glutamate--tRNA ligase 2 from Halorhodospira halophila (strain DSM 244 / SL1) (Ectothiorhodospira halophila (strain DSM 244 / SL1)).